The primary structure comprises 488 residues: Glutamyl-tRNA(Gln) amidotransferase subunit A (488 aa).

Catalysis depends on charge relay system residues Lys77 and Ser152. Ser176 acts as the Acyl-ester intermediate in catalysis.

It belongs to the amidase family. GatA subfamily. Heterotrimer of A, B and C subunits.

The catalysed reaction is L-glutamyl-tRNA(Gln) + L-glutamine + ATP + H2O = L-glutaminyl-tRNA(Gln) + L-glutamate + ADP + phosphate + H(+). Functionally, allows the formation of correctly charged Gln-tRNA(Gln) through the transamidation of misacylated Glu-tRNA(Gln) in organisms which lack glutaminyl-tRNA synthetase. The reaction takes place in the presence of glutamine and ATP through an activated gamma-phospho-Glu-tRNA(Gln). This chain is Glutamyl-tRNA(Gln) amidotransferase subunit A, found in Streptococcus pyogenes serotype M1.